The following is a 302-amino-acid chain: Cobalt-precorrin-6A reductase (302 aa).

Basic and acidic residues predominate over residues 1–10; the sequence is MQTPEIKEGT. The tract at residues 1-37 is disordered; the sequence is MQTPEIKEGTEQYLWRRKTMNPGDKGVKRKGSDRQRE.

It belongs to the precorrin-6x reductase family.

The enzyme catalyses Co-precorrin-6B + NAD(+) = Co-precorrin-6A + NADH + H(+). It functions in the pathway cofactor biosynthesis; adenosylcobalamin biosynthesis; cob(II)yrinate a,c-diamide from sirohydrochlorin (anaerobic route): step 7/10. Functionally, catalyzes the reduction of the macrocycle of cobalt-precorrin-6A to cobalt-precorrin-6B. The chain is Cobalt-precorrin-6A reductase (cbiJ) from Methanothermobacter thermautotrophicus (strain ATCC 29096 / DSM 1053 / JCM 10044 / NBRC 100330 / Delta H) (Methanobacterium thermoautotrophicum).